The chain runs to 148 residues: Holo-[acyl-carrier-protein] synthase (148 aa).

Mg(2+) is bound by residues D9 and E63.

Belongs to the P-Pant transferase superfamily. AcpS family. The cofactor is Mg(2+).

It localises to the cytoplasm. It carries out the reaction apo-[ACP] + CoA = holo-[ACP] + adenosine 3',5'-bisphosphate + H(+). Transfers the 4'-phosphopantetheine moiety from coenzyme A to a Ser of acyl-carrier-protein. This Burkholderia cenocepacia (strain HI2424) protein is Holo-[acyl-carrier-protein] synthase.